A 79-amino-acid chain; its full sequence is Conotoxin Tr6.2 (79 aa).

An N-terminal signal peptide occupies residues 1–22 (MKLTCVLIISVLFLTASQLITA). A propeptide spanning residues 23 to 47 (VYSRDKQQYRAARLRDEMRNLKGAR) is cleaved from the precursor. 3 disulfide bridges follow: cysteine 49–cysteine 62, cysteine 56–cysteine 67, and cysteine 61–cysteine 77. 4-hydroxyproline is present on residues proline 60 and proline 63.

The protein belongs to the conotoxin O1 superfamily. In terms of tissue distribution, expressed by the venom duct.

The protein localises to the secreted. Its function is as follows. Ion channel inhibitor that inhibits the increase in intracellular calcium upon depolarization in DRG neurons. In vivo, both intraperitoneal and intracranial injections into mice induce hyperactivity. The polypeptide is Conotoxin Tr6.2 (Conus terebra (Sea snail)).